The sequence spans 213 residues: Probable nicotinate-nucleotide adenylyltransferase (213 aa).

This sequence belongs to the NadD family.

It carries out the reaction nicotinate beta-D-ribonucleotide + ATP + H(+) = deamido-NAD(+) + diphosphate. Its pathway is cofactor biosynthesis; NAD(+) biosynthesis; deamido-NAD(+) from nicotinate D-ribonucleotide: step 1/1. Functionally, catalyzes the reversible adenylation of nicotinate mononucleotide (NaMN) to nicotinic acid adenine dinucleotide (NaAD). The protein is Probable nicotinate-nucleotide adenylyltransferase of Trichlorobacter lovleyi (strain ATCC BAA-1151 / DSM 17278 / SZ) (Geobacter lovleyi).